Consider the following 603-residue polypeptide: Glutamyl-tRNA(Gln) amidotransferase subunit B, mitochondrial (603 aa).

Disordered stretches follow at residues 38–61 (RGRDWSSTSRRAIDTQTSGASNGA) and 72–91 (EQAREGRAATRKGEVSPPEH). The span at 42–58 (WSSTSRRAIDTQTSGAS) shows a compositional bias: polar residues.

Belongs to the GatB/GatE family. GatB subfamily. In terms of assembly, subunit of the heterotrimeric GatCAB amidotransferase (AdT) complex, composed of A, B and C subunits.

It is found in the mitochondrion. The catalysed reaction is L-glutamyl-tRNA(Gln) + L-glutamine + ATP + H2O = L-glutaminyl-tRNA(Gln) + L-glutamate + ADP + phosphate + H(+). Allows the formation of correctly charged Gln-tRNA(Gln) through the transamidation of misacylated Glu-tRNA(Gln) in the mitochondria. The reaction takes place in the presence of glutamine and ATP through an activated gamma-phospho-Glu-tRNA(Gln). The protein is Glutamyl-tRNA(Gln) amidotransferase subunit B, mitochondrial of Paracoccidioides brasiliensis (strain Pb18).